We begin with the raw amino-acid sequence, 142 residues long: Hemoglobin subunit zeta (142 aa).

The residue at position 2 (serine 2) is an N-acetylserine. Positions 2–142 (SLTKAERTMV…VSSVLTEKYR (141 aa)) constitute a Globin domain. Serine 53 is modified (phosphoserine). Residue histidine 59 participates in heme b binding. Serine 73 carries the phosphoserine modification. Residue histidine 88 coordinates heme b.

Belongs to the globin family. In terms of assembly, heterotetramer of two zeta chains and beta-type chains.

The zeta chain is an alpha-type chain of mammalian embryonic hemoglobin. This is Hemoglobin subunit zeta (HBZ1) from Equus caballus (Horse).